Consider the following 809-residue polypeptide: Protein PHOX3 (809 aa).

The disordered stretch occupies residues 1-22 (MEKQNEEISTDDAETSQSQLVD). 5 TPR repeats span residues 126 to 159 (AQGL…LPKD), 164 to 199 (SHVR…TPDH), 200 to 233 (NKAL…DPKN), 235 to 265 (MASE…PPDY), and 274 to 311 (AALW…EKKN). Positions 288-339 (TKKSNQVEEKSEGEGEDVEPEKKNNVLAEKGKEKIKMKVKGKQSDKRSDTSK) are disordered. A Phosphoserine modification is found at S298. Basic and acidic residues predominate over residues 307–339 (PEKKNNVLAEKGKEKIKMKVKGKQSDKRSDTSK). The region spanning 359 to 438 (NKDVKFVYSD…GTMRFYVVEV (80 aa)) is the PB1 domain. TPR repeat units follow at residues 508–541 (SEAM…SLLN), 563–597 (ESVS…KPEC), and 615–648 (SWYY…IKKS). Positions 656-686 (ETGKESEPSQAGKTDCLTHEKDLGSSTQNNP) are disordered. One copy of the TPR 9 repeat lies at 709–741 (SIMEYKLDQPFWRESLEAAMEKFELAGTCKDDV).

Functionally, carboxylate clamp type tetratricopeptide repeat protein that may act as a potential Hsp90/Hsp70 co-chaperone. Contributes to polar growth of root hairs. The chain is Protein PHOX3 from Arabidopsis thaliana (Mouse-ear cress).